We begin with the raw amino-acid sequence, 209 residues long: Large ribosomal subunit protein uL3 (209 aa).

Residues 128–156 (FAGGSRTHGQSDRLRAPGSVGGSSDPSRT) are disordered.

It belongs to the universal ribosomal protein uL3 family. In terms of assembly, part of the 50S ribosomal subunit. Forms a cluster with proteins L14 and L19.

One of the primary rRNA binding proteins, it binds directly near the 3'-end of the 23S rRNA, where it nucleates assembly of the 50S subunit. The polypeptide is Large ribosomal subunit protein uL3 (Prosthecochloris aestuarii (strain DSM 271 / SK 413)).